The chain runs to 69 residues: Cytochrome c oxidase subunit 8A, mitochondrial (69 aa).

The transit peptide at 1–25 (MSVLTSLLLRGLTGSARRLPVPRAK) directs the protein to the mitochondrion. The short motif at 2-19 (SVLTSLLLRGLTGSARRL) is the SIFI-degron element. Residues 26–36 (VHSMPPEEELG) lie on the Mitochondrial matrix side of the membrane. Residues 37 to 60 (TLEKAIALTSCFVSLFLPAGWILS) form a helical membrane-spanning segment. Over 61–69 (HLEDYKRPE) the chain is Mitochondrial intermembrane.

Belongs to the cytochrome c oxidase VIII family. Component of the cytochrome c oxidase (complex IV, CIV), a multisubunit enzyme composed of 14 subunits. The complex is composed of a catalytic core of 3 subunits MT-CO1, MT-CO2 and MT-CO3, encoded in the mitochondrial DNA, and 11 supernumerary subunits COX4I, COX5A, COX5B, COX6A, COX6B, COX6C, COX7A, COX7B, COX7C, COX8 and NDUFA4, which are encoded in the nuclear genome. The complex exists as a monomer or a dimer and forms supercomplexes (SCs) in the inner mitochondrial membrane with NADH-ubiquinone oxidoreductase (complex I, CI) and ubiquinol-cytochrome c oxidoreductase (cytochrome b-c1 complex, complex III, CIII), resulting in different assemblies (supercomplex SCI(1)III(2)IV(1) and megacomplex MCI(2)III(2)IV(2)). In terms of processing, in response to mitochondrial stress, the precursor protein is ubiquitinated by the SIFI complex in the cytoplasm before mitochondrial import, leading to its degradation. Within the SIFI complex, UBR4 initiates ubiquitin chain that are further elongated or branched by KCMF1.

Its subcellular location is the mitochondrion inner membrane. Its pathway is energy metabolism; oxidative phosphorylation. Functionally, component of the cytochrome c oxidase, the last enzyme in the mitochondrial electron transport chain which drives oxidative phosphorylation. The respiratory chain contains 3 multisubunit complexes succinate dehydrogenase (complex II, CII), ubiquinol-cytochrome c oxidoreductase (cytochrome b-c1 complex, complex III, CIII) and cytochrome c oxidase (complex IV, CIV), that cooperate to transfer electrons derived from NADH and succinate to molecular oxygen, creating an electrochemical gradient over the inner membrane that drives transmembrane transport and the ATP synthase. Cytochrome c oxidase is the component of the respiratory chain that catalyzes the reduction of oxygen to water. Electrons originating from reduced cytochrome c in the intermembrane space (IMS) are transferred via the dinuclear copper A center (CU(A)) of subunit 2 and heme A of subunit 1 to the active site in subunit 1, a binuclear center (BNC) formed by heme A3 and copper B (CU(B)). The BNC reduces molecular oxygen to 2 water molecules using 4 electrons from cytochrome c in the IMS and 4 protons from the mitochondrial matrix. This chain is Cytochrome c oxidase subunit 8A, mitochondrial (COX8A), found in Papio anubis (Olive baboon).